The chain runs to 137 residues: Large ribosomal subunit protein uL16 (137 aa).

Belongs to the universal ribosomal protein uL16 family. In terms of assembly, part of the 50S ribosomal subunit.

In terms of biological role, binds 23S rRNA and is also seen to make contacts with the A and possibly P site tRNAs. In Baumannia cicadellinicola subsp. Homalodisca coagulata, this protein is Large ribosomal subunit protein uL16.